Reading from the N-terminus, the 146-residue chain is Hemoglobin subunit beta-1 (146 aa).

In terms of domain architecture, Globin spans 2–146; that stretch reads HWTAEEKHLL…VAHALARRYH (145 aa). Residues histidine 63 and histidine 92 each coordinate heme b.

Belongs to the globin family. There are three forms of hemoglobin in Sphenodon: A, A' and D. Hb A is a tetramer of two alpha-A and two beta-1, Hb A' is a tetramer of two alpha-a and two beta-2, Hb D is a tetramer of two alpha-D and two beta-2.

Involved in oxygen transport from the lung to the various peripheral tissues. The sequence is that of Hemoglobin subunit beta-1 (HBB1) from Sphenodon punctatus (Tuatara).